A 342-amino-acid polypeptide reads, in one-letter code: Holliday junction branch migration complex subunit RuvB (342 aa).

The large ATPase domain (RuvB-L) stretch occupies residues 1 to 179 (MTNILSPEKS…FGIPMRLNFY (179 aa)). ATP-binding positions include Ile18, Arg19, Gly60, Lys63, Thr64, Thr65, 126–128 (EDF), Arg169, Tyr179, and Arg216. Thr64 serves as a coordination point for Mg(2+). The tract at residues 180–250 (NTEELKKVLN…ISDFGLKRLE (71 aa)) is small ATPAse domain (RuvB-S). The head domain (RuvB-H) stretch occupies residues 253-342 (RIGLDSNDYR…HQFNIFNENE (90 aa)). DNA-binding residues include Arg289, Arg308, and Arg313.

The protein belongs to the RuvB family. Homohexamer. Forms an RuvA(8)-RuvB(12)-Holliday junction (HJ) complex. HJ DNA is sandwiched between 2 RuvA tetramers; dsDNA enters through RuvA and exits via RuvB. An RuvB hexamer assembles on each DNA strand where it exits the tetramer. Each RuvB hexamer is contacted by two RuvA subunits (via domain III) on 2 adjacent RuvB subunits; this complex drives branch migration. In the full resolvosome a probable DNA-RuvA(4)-RuvB(12)-RuvC(2) complex forms which resolves the HJ.

Its subcellular location is the cytoplasm. The catalysed reaction is ATP + H2O = ADP + phosphate + H(+). Its function is as follows. The RuvA-RuvB-RuvC complex processes Holliday junction (HJ) DNA during genetic recombination and DNA repair, while the RuvA-RuvB complex plays an important role in the rescue of blocked DNA replication forks via replication fork reversal (RFR). RuvA specifically binds to HJ cruciform DNA, conferring on it an open structure. The RuvB hexamer acts as an ATP-dependent pump, pulling dsDNA into and through the RuvAB complex. RuvB forms 2 homohexamers on either side of HJ DNA bound by 1 or 2 RuvA tetramers; 4 subunits per hexamer contact DNA at a time. Coordinated motions by a converter formed by DNA-disengaged RuvB subunits stimulates ATP hydrolysis and nucleotide exchange. Immobilization of the converter enables RuvB to convert the ATP-contained energy into a lever motion, pulling 2 nucleotides of DNA out of the RuvA tetramer per ATP hydrolyzed, thus driving DNA branch migration. The RuvB motors rotate together with the DNA substrate, which together with the progressing nucleotide cycle form the mechanistic basis for DNA recombination by continuous HJ branch migration. Branch migration allows RuvC to scan DNA until it finds its consensus sequence, where it cleaves and resolves cruciform DNA. The protein is Holliday junction branch migration complex subunit RuvB of Rickettsia peacockii (strain Rustic).